We begin with the raw amino-acid sequence, 325 residues long: Lactonase drp35 (325 aa).

Residues Glu-46, Ser-108, Gly-110, Glu-128, Thr-131, Tyr-133, Asp-136, Asn-183, Asp-234, and Ser-235 each contribute to the Ca(2+) site. Asp-234 functions as the Proton donor in the catalytic mechanism.

The protein belongs to the SMP-30/CGR1 family. It depends on Ca(2+) as a cofactor.

The protein resides in the cytoplasm. In terms of biological role, exhibits lactonase activity. Acts in cells with perturbed membrane integrity and is possibly related to the membrane homeostasis. The chain is Lactonase drp35 (drp35) from Staphylococcus haemolyticus (strain JCSC1435).